The sequence spans 148 residues: Deoxyuridine 5'-triphosphate nucleotidohydrolase (148 aa).

Residues 68–70 (RSG), N81, 85–87 (TID), and K95 each bind substrate.

Belongs to the dUTPase family. Mg(2+) is required as a cofactor.

It catalyses the reaction dUTP + H2O = dUMP + diphosphate + H(+). Its pathway is pyrimidine metabolism; dUMP biosynthesis; dUMP from dCTP (dUTP route): step 2/2. In terms of biological role, this enzyme is involved in nucleotide metabolism: it produces dUMP, the immediate precursor of thymidine nucleotides and it decreases the intracellular concentration of dUTP so that uracil cannot be incorporated into DNA. The protein is Deoxyuridine 5'-triphosphate nucleotidohydrolase of Rickettsia peacockii (strain Rustic).